The primary structure comprises 380 residues: DNA-directed RNA polymerase subunit Rpo1C (380 aa).

The protein belongs to the RNA polymerase beta' chain family. In terms of assembly, part of the RNA polymerase complex.

Its subcellular location is the cytoplasm. It carries out the reaction RNA(n) + a ribonucleoside 5'-triphosphate = RNA(n+1) + diphosphate. In terms of biological role, DNA-dependent RNA polymerase (RNAP) catalyzes the transcription of DNA into RNA using the four ribonucleoside triphosphates as substrates. Forms part of the jaw domain. The protein is DNA-directed RNA polymerase subunit Rpo1C of Archaeoglobus fulgidus (strain ATCC 49558 / DSM 4304 / JCM 9628 / NBRC 100126 / VC-16).